The sequence spans 735 residues: 1,4-alpha-glucan branching enzyme GlgB (735 aa).

Residue D418 is the Nucleophile of the active site. E471 serves as the catalytic Proton donor.

It belongs to the glycosyl hydrolase 13 family. GlgB subfamily. As to quaternary structure, monomer.

The catalysed reaction is Transfers a segment of a (1-&gt;4)-alpha-D-glucan chain to a primary hydroxy group in a similar glucan chain.. It functions in the pathway glycan biosynthesis; glycogen biosynthesis. In terms of biological role, catalyzes the formation of the alpha-1,6-glucosidic linkages in glycogen by scission of a 1,4-alpha-linked oligosaccharide from growing alpha-1,4-glucan chains and the subsequent attachment of the oligosaccharide to the alpha-1,6 position. The sequence is that of 1,4-alpha-glucan branching enzyme GlgB from Agrobacterium fabrum (strain C58 / ATCC 33970) (Agrobacterium tumefaciens (strain C58)).